Here is an 81-residue protein sequence, read N- to C-terminus: Short neurotoxin D (81 aa).

The signal sequence occupies residues Met-1–Thr-21. Cystine bridges form between Cys-24–Cys-43, Cys-38–Cys-60, Cys-62–Cys-73, and Cys-74–Cys-79.

It belongs to the three-finger toxin family. Short-chain subfamily. Type I alpha-neurotoxin sub-subfamily. Expressed by the venom gland.

It is found in the secreted. Binds to muscle nicotinic acetylcholine receptor (nAChR) and inhibit acetylcholine from binding to the receptor, thereby impairing neuromuscular transmission. The sequence is that of Short neurotoxin D from Aipysurus laevis (Olive sea snake).